Here is a 353-residue protein sequence, read N- to C-terminus: Stomatin-like protein 2, mitochondrial (353 aa).

Residues 1–28 (MLARAARGTGALLLRGSVQASGRIPRRA) constitute a mitochondrion transit peptide. Serine 17 carries the post-translational modification Phosphoserine; by PKC/PRKCZ. Tyrosine 124 carries the phosphotyrosine modification. Lysine 145 is modified (N6-acetyllysine; alternate). The residue at position 145 (lysine 145) is an N6-succinyllysine; alternate. Residues 215-252 (INVAEGKKQAQILASEAEKAEQINQAAGEASAVLAKAK) adopt a coiled-coil conformation. Lysine 233 carries the post-translational modification N6-acetyllysine. The interval 324–353 (VPGAQNSSEARRDVQTTDTSIEELGRVKLS) is disordered. The residue at position 330 (serine 330) is a Phosphoserine.

This sequence belongs to the band 7/mec-2 family. Forms homooligomers. Interacts with MFN2; may form heterooligomers. Interacts with PHB1 and PHB2; recruits them to cardiolipin-enriched mitochondrial membranes and stabilizes them. Interacts with CACNA2D2.

It is found in the cell membrane. The protein resides in the mitochondrion. The protein localises to the mitochondrion inner membrane. Its subcellular location is the mitochondrion intermembrane space. It localises to the membrane raft. It is found in the cytoplasm. The protein resides in the cytoskeleton. Its function is as follows. Mitochondrial protein that probably regulates the biogenesis and the activity of mitochondria. Stimulates cardiolipin biosynthesis, binds cardiolipin-enriched membranes where it recruits and stabilizes some proteins including prohibitin and may therefore act in the organization of functional microdomains in mitochondrial membranes. Through regulation of the mitochondrial function may play a role into several biological processes including cell migration, cell proliferation, T-cell activation, calcium homeostasis and cellular response to stress. May play a role in calcium homeostasis through negative regulation of calcium efflux from mitochondria. Required for mitochondrial hyperfusion a pro-survival cellular response to stress which results in increased ATP production by mitochondria. May also regulate the organization of functional domains at the plasma membrane and play a role in T-cell activation through association with the T-cell receptor signaling complex and its regulation. The protein is Stomatin-like protein 2, mitochondrial (Stoml2) of Rattus norvegicus (Rat).